The following is a 308-amino-acid chain: MSAQKPGLHPRNRHQHRYDLAALCQTTPELTSFLIRTPAGEQSVDFANPQAVKALNKALLAHFYAVTHWDIPPGFLCPPVPGRADYIHHLADLLGETTGSIPAQATILDVGVGANCIYPLIGVHEYGWRFTGSEVSDAAMSSAQAIIQANTGLSRAIRLRRQKDPAAIFTGIIHKNEFYDATLCNPPFHDSAAAARAGSERKRRNLGQNKDDALNFGGQQQELWCEGGEVAFIKKMIAESQSFRRQVLWFTTLVSRGENLPPLYRALAEAGAVKVVKKEMAQGQKQSRFIAWTFMDDDQRRRFITRKR.

The protein belongs to the methyltransferase superfamily. METTL16/RlmF family.

It localises to the cytoplasm. The enzyme catalyses adenosine(1618) in 23S rRNA + S-adenosyl-L-methionine = N(6)-methyladenosine(1618) in 23S rRNA + S-adenosyl-L-homocysteine + H(+). Its function is as follows. Specifically methylates the adenine in position 1618 of 23S rRNA. In Salmonella agona (strain SL483), this protein is Ribosomal RNA large subunit methyltransferase F.